The sequence spans 138 residues: MIRTMFKSKIHRATVTHANLHYVGSVTVDKDLLDAADILPGELVAIVDVTNGSRLETYTIEGQAGSGVIGINGAAAHLVNIGDTVILISYAQMTTAEAREYLPSIVHVDAANKIVQLGTDPAEALTEGLNRPPFSTTA.

Ser25 acts as the Schiff-base intermediate with substrate; via pyruvic acid in catalysis. Pyruvic acid (Ser) is present on Ser25. Thr57 lines the substrate pocket. Catalysis depends on Tyr58, which acts as the Proton donor. 73–75 (GAA) serves as a coordination point for substrate.

It belongs to the PanD family. In terms of assembly, heterooctamer of four alpha and four beta subunits. Pyruvate is required as a cofactor. Is synthesized initially as an inactive proenzyme, which is activated by self-cleavage at a specific serine bond to produce a beta-subunit with a hydroxyl group at its C-terminus and an alpha-subunit with a pyruvoyl group at its N-terminus.

The protein localises to the cytoplasm. The catalysed reaction is L-aspartate + H(+) = beta-alanine + CO2. Its pathway is cofactor biosynthesis; (R)-pantothenate biosynthesis; beta-alanine from L-aspartate: step 1/1. In terms of biological role, catalyzes the pyruvoyl-dependent decarboxylation of aspartate to produce beta-alanine. The protein is Aspartate 1-decarboxylase of Renibacterium salmoninarum (strain ATCC 33209 / DSM 20767 / JCM 11484 / NBRC 15589 / NCIMB 2235).